The primary structure comprises 185 residues: MKTTEYVAEILNELHNSAAYISNEEADQLADHILSSHQIFTAGAGRSGLMAKSFAMRLMHMGFNAHIVGEILTPPLAEGDLVIIGSGSGETKSLIHTAAKAKSLHGIVAALTINPESSIGKQADLIIRMPGSPKDQSNGSYKTIQPMGSLFEQTLLLFYDAVILKLMEKKGLDSETMFTHHANLE.

Residues 29–172 (LADHILSSHQ…ILKLMEKKGL (144 aa)) enclose the SIS domain. Residues S47 and 86 to 91 (SGSGET) contribute to the substrate site. E152 functions as the Proton acceptor in the catalytic mechanism.

It belongs to the SIS family. PHI subfamily. Homotetramer.

The catalysed reaction is D-arabino-hex-3-ulose 6-phosphate = beta-D-fructose 6-phosphate. It functions in the pathway one-carbon metabolism; formaldehyde assimilation via RuMP pathway; D-fructose 6-phosphate from D-ribulose 5-phosphate and formaldehyde: step 2/2. In terms of biological role, catalyzes the isomerization between 3-hexulose 6-phosphate and fructose 6-phosphate. Together with HxlA, may act as a formaldehyde detoxification system. This Bacillus subtilis (strain 168) protein is 3-hexulose-6-phosphate isomerase (hxlB).